Consider the following 1279-residue polypeptide: Botulinum-like toxin eBoNT/J (1279 aa).

A Zn(2+)-binding site is contributed by histidine 225. Residue glutamate 226 is part of the active site. Histidine 229 and glutamate 269 together coordinate Zn(2+). Cysteine 424 and cysteine 438 form a disulfide bridge. The interval 435-843 (LSSCIEILED…RLTSLPVFNL (409 aa)) is translocation domain (TD). Residues 476-525 (ADTILDSTLSNYDFSKEINFTSTVPIITVEDPLETDEDVPVISEDRTVYV) are belt; not required for channel formation. Residues 860 to 1080 (IDIQDSEVLN…EVNRLYWKYF (221 aa)) are N-terminus of receptor binding domain (N-RBD). Positions 1081 to 1279 (EGSYLRDVWG…IPVDEGWKED (199 aa)) are C-terminus of receptor binding domain (C-RBD). The Host ganglioside-binding motif signature appears at 1250-1253 (SAWY).

Belongs to the peptidase M27 family. In terms of assembly, might be a disulfide-linked heterodimer of a light chain (LC) and heavy chain (HC). The cofactor is Zn(2+).

The protein resides in the secreted. Its subcellular location is the host cytoplasm. It localises to the host cytosol. The protein localises to the host cell membrane. It is found in the host cytoplasmic vesicle membrane. It catalyses the reaction Limited hydrolysis of proteins of the neuroexocytosis apparatus, synaptobrevins, SNAP25 or syntaxin. No detected action on small molecule substrates.. Functionally, strongly resembles a botulinum-type toxin, with the appropriate domains and residues to have proteolytic function, although its C-terminus (which binds to a eukaryotic host cell) is different enough from clostrial botulinum toxins that it might bind another cell target. Might be a precursor of a toxin that binds to an unknown eukaryotic cell receptor(s), and be taken up into the host cell via the endocytic pathway. When the pH of the putative toxin-containing endosome drops a structural rearrangement occurs so that the N-terminus of the heavy chain forms pores that allows the light chain to translocate into the cytosol. Once in the cytosol the disulfide bond linking the 2 subunits is reduced and light chain cleaves its target protein. This Enterococcus sp. (strain 3G1_DIV0629) protein is Botulinum-like toxin eBoNT/J.